A 201-amino-acid chain; its full sequence is uncharacterized protein (201 aa).

This is an uncharacterized protein from Acanthamoeba polyphaga mimivirus (APMV).